The following is a 445-amino-acid chain: tRNA modification GTPase MnmE (445 aa).

The (6S)-5-formyl-5,6,7,8-tetrahydrofolate site is built by Arg20, Glu79, and Lys119. A TrmE-type G domain is found at 215–371 (GLKLAIIGPP…ILKNIEEIAE (157 aa)). Position 225 (Asn225) interacts with K(+). GTP contacts are provided by residues 225 to 230 (NAGKSS), 244 to 250 (SNIAGTT), and 269 to 272 (DTAG). Ser229 is a binding site for Mg(2+). The K(+) site is built by Ser244, Ile246, and Thr249. Thr250 provides a ligand contact to Mg(2+). Lys445 provides a ligand contact to (6S)-5-formyl-5,6,7,8-tetrahydrofolate.

This sequence belongs to the TRAFAC class TrmE-Era-EngA-EngB-Septin-like GTPase superfamily. TrmE GTPase family. In terms of assembly, homodimer. Heterotetramer of two MnmE and two MnmG subunits. The cofactor is K(+).

It is found in the cytoplasm. Its function is as follows. Exhibits a very high intrinsic GTPase hydrolysis rate. Involved in the addition of a carboxymethylaminomethyl (cmnm) group at the wobble position (U34) of certain tRNAs, forming tRNA-cmnm(5)s(2)U34. This chain is tRNA modification GTPase MnmE, found in Rickettsia bellii (strain OSU 85-389).